An 875-amino-acid chain; its full sequence is Leucine--tRNA ligase (875 aa).

The 'HIGH' region motif lies at 57–67 (PYPSGQIHMGH). Positions 631–635 (KMSKS) match the 'KMSKS' region motif. Lys-634 is an ATP binding site.

It belongs to the class-I aminoacyl-tRNA synthetase family.

It is found in the cytoplasm. It carries out the reaction tRNA(Leu) + L-leucine + ATP = L-leucyl-tRNA(Leu) + AMP + diphosphate. This is Leucine--tRNA ligase from Granulibacter bethesdensis (strain ATCC BAA-1260 / CGDNIH1).